The chain runs to 327 residues: G protein pathway suppressor 2 (327 aa).

Positions 14-109 form a coiled coil; that stretch reads MARALHRHIM…RRRKEQSDLT (96 aa). The tract at residues 26 to 65 is disordered; sequence RERKRQEEEEVDKMMEQKMKEEQERRKKKEMEERMSLEET. Glycyl lysine isopeptide (Lys-Gly) (interchain with G-Cter in SUMO1) cross-links involve residues Lys45 and Lys71. The tract at residues 61 to 94 is interaction with SUMO; the sequence is SLEETKEQILKLQEKLSALQEEKHQLFLQLKKVL. Disordered regions lie at residues 178–208, 253–285, and 300–327; these read GQFQGSPGGAYGTAQPPPHYGPTQPAYSPSQ, QKQMEHANQQTSFSDSSSLRPMHPQALHPAPGL, and KSGFATTSQPGPRLPFIQHSQNPRFYHK. Over residues 253–271 the composition is skewed to polar residues; sequence QKQMEHANQQTSFSDSSSL. Arg312 is modified (asymmetric dimethylarginine). Over residues 317–327 the composition is skewed to polar residues; the sequence is QHSQNPRFYHK. Residue Arg323 is modified to Asymmetric dimethylarginine; alternate. Arg323 carries the omega-N-methylarginine; alternate modification.

As to quaternary structure, component of the N-Cor repressor complex, at least composed of NCOR1, NCOR2, HDAC3, TBL1X, TBL1R, CORO2A and GPS2. Interacts (when sumoylated at Lys-71) with TBL1X; leading to protect GPS2 from degradation by the proteasome. Interacts with UBE2N; leading to inhibit UBE2N/Ubc13 activity. Interacts with TRAF1. Interacts with TRAF2. Interacts with TRAF6. Interacts with PPARG (when in the liganded conformation). Interacts with (sumoylated) NR1H2; interaction with sumoylated NR1H2 and NR5A2 onto hepatic acute phase protein promoters prevents N-Cor corepressor complex dissociation. Interacts with (sumoylated) NR5A2; interaction with sumoylated NR1H2 and NR5A2 onto hepatic acute phase protein promoters prevents N-Cor corepressor complex dissociation. Interacts with NR1H3. Interacts with RFX4. Interacts with ANKRD26. In terms of processing, sumoylation regulates its subcellular location. Sumoylation at Lys-45 and Lys-71 regulates the shuttling between the cytoplasm and the nucleus. Sumoylation at Lys-71 is required for interaction with TBL1X. Sumoylated at Lys-45 and Lys-71 in mitochondrion. Desumoylation by SENP1 leads to relocation from the mitochondria to the nucleus. Ubiquitinated at the C-terminus by SIAH2; leading to its degradation by the proteasome. Interaction with TBL1X and methylation at Arg-323 protect GPS2 against ubiquitination and degradation. Post-translationally, methylated at Arg-312 and Arg-323 by PRMT6. Methylation at Arg-323 protects from degradation by the proteasome.

Its subcellular location is the nucleus. It is found in the mitochondrion. It localises to the cytoplasm. The protein localises to the cytosol. Key regulator of inflammation, lipid metabolism and mitochondrion homeostasis that acts by inhibiting the activity of the ubiquitin-conjugating enzyme UBE2N/Ubc13, thereby inhibiting 'Lys-63'-linked ubiquitination. In the nucleus, can both acts as a corepressor and coactivator of transcription, depending on the context. Acts as a transcription coactivator in adipocytes by promoting the recruitment of PPARG to promoters: acts by inhibiting the activity of the ubiquitin-conjugating enzyme UBE2N/Ubc13, leading to stabilization of KDM4A and subsequent histone H3 'Lys-9' (H3K9) demethylation. Promotes cholesterol efflux by acting as a transcription coactivator. Acts as a regulator of B-cell development by inhibiting UBE2N/Ubc13, thereby restricting the activation of Toll-like receptors (TLRs) and B-cell antigen receptors (BCRs) signaling pathways. Acts as a key mediator of mitochondrial stress response: in response to mitochondrial depolarization, relocates from the mitochondria to the nucleus following desumoylation and specifically promotes expression of nuclear-encoded mitochondrial genes. Promotes transcription of nuclear-encoded mitochondrial genes by inhibiting UBE2N/Ubc13. Can also act as a corepressor as part of the N-Cor repressor complex by repressing active PPARG. Plays an anti-inflammatory role in macrophages and is required for insulin sensitivity by acting as a corepressor. Plays an anti-inflammatory role during the hepatic acute phase response by interacting with sumoylated NR1H2 and NR5A2 proteins, thereby preventing N-Cor corepressor complex dissociation. In the cytosol, also plays a non-transcriptional role by regulating insulin signaling and pro-inflammatory pathways. In the cytoplasm, acts as a negative regulator of inflammation by inhibiting the pro-inflammatory TNF-alpha pathway; acts by repressing UBE2N/Ubc13 activity. In the cytoplasm of adipocytes, restricts the activation of insulin signaling via inhibition of UBE2N/Ubc13-mediated ubiquitination of AKT. Able to suppress G-protein- and mitogen-activated protein kinase-mediated signal transduction. The protein is G protein pathway suppressor 2 of Mus musculus (Mouse).